The chain runs to 127 residues: DNA-directed RNA polymerases I, II, and III subunit RPABC2 (127 aa).

Acidic residues predominate over residues 1–32; the sequence is MSDNEDNFDGDDFDDVEEDEGLDDLENAEEEG. Positions 1–52 are disordered; that stretch reads MSDNEDNFDGDDFDDVEEDEGLDDLENAEEEGQVNVEILPSGERPQANQKRI. Ser2 is subject to N-acetylserine. Phosphoserine; by CK2 is present on Ser2.

Belongs to the archaeal Rpo6/eukaryotic RPB6 RNA polymerase subunit family. As to quaternary structure, component of the RNA polymerase I (Pol I), RNA polymerase II (Pol II) and RNA polymerase III (Pol III) complexes consisting of at least 13, 12 and 17 subunits, respectively. Pol I complex consists of a ten-subunit catalytic core composed of POLR1A/RPA1, POLR1B/RPA2, POLR1C/RPAC1, POLR1D/RPAC2, POLR1H/RPA12, POLR2E/RPABC1, POLR2F/RPABC2, POLR2H/RPABC3, POLR2K/RPABC4 and POLR2L/RPABC5; a mobile stalk subunit POLR1F/RPA43 protruding from the core and additional subunits homologous to general transcription factors POLR1E/RPA49 and POLR1G/RPA34. Part of Pol I pre-initiation complex (PIC), in which Pol I core assembles with RRN3 and promoter-bound UTBF and SL1/TIF-IB complex. Pol II complex contains a ten-subunit catalytic core composed of POLR2A/RPB1, POLR2B/RPB2, POLR2C/RPB3, POLR2I/RPB9, POLR2J/RPB11, POLR2E/RPABC1, POLR2F/RPABC2, POLR2H/RPABC3, POLR2K/RPABC4 and POLR2L/RPABC5 and a mobile stalk composed of two subunits POLR2D/RPB4 and POLR2G/RPB7. Part of Pol II(G) complex, in which Pol II core associates with an additional subunit POLR2M; unlike conventional Pol II, Pol II(G) functions as a transcriptional repressor. Part of TBP-based Pol II pre-initiation complex (PIC), in which Pol II core assembles with general transcription factors and other specific initiation factors including GTF2E1, GTF2E2, GTF2F1, GTF2F2, TCEA1, ERCC2, ERCC3, GTF2H2, GTF2H3, GTF2H4, GTF2H5, GTF2A1, GTF2A2, GTF2B and TBP; this large multi-subunit PIC complex mediates DNA unwinding and targets Pol II core to the transcription start site where the first phosphodiester bond forms. Pol III complex consists of a ten-subunit catalytic core composed of POLR3A/RPC1, POLR3B/RPC2, POLR1C/RPAC1, POLR1D/RPAC2, POLR3K/RPC10, POLR2E/RPABC1, POLR2F/RPABC2, POLR2H/RPABC3, POLR2K/RPABC4 and POLR2L/RPABC5; a mobile stalk composed of two subunits POLR3H/RPC8 and CRCP/RPC9, protruding from the core and functioning primarily in transcription initiation; and additional subunits homologous to general transcription factors of the RNA polymerase II machinery, POLR3C/RPC3-POLR3F/RPC6-POLR3G/RPC7 heterotrimer required for transcription initiation and POLR3D/RPC4-POLR3E/RPC5 heterodimer involved in both transcription initiation and termination.

The protein resides in the nucleus. It is found in the nucleolus. Functionally, DNA-dependent RNA polymerase catalyzes the transcription of DNA into RNA using the four ribonucleoside triphosphates as substrates. Common component of RNA polymerases I, II, and III which synthesize ribosomal RNA precursors, mRNA precursors and many functional non-coding RNAs, and small RNAs, such as 5S rRNA and tRNAs, respectively. Pol II is the central component of the basal RNA polymerase II transcription machinery. Pols are composed of mobile elements that move relative to each other. In Pol II, POLR2F/RPABC2 is part of the clamp element and together with parts of POLR2A/RPB1 and POLR2B/RPB2 forms a pocket to which the POLR2D/RPB4-POLR2G/RPB7 subcomplex binds. This Bos taurus (Bovine) protein is DNA-directed RNA polymerases I, II, and III subunit RPABC2 (POLR2F).